The chain runs to 206 residues: Large ribosomal subunit protein uL4 (206 aa).

The disordered stretch occupies residues 46 to 95 (GNRAQKTRAEVKHSTKKPWRQKGTGRARSGMTSSPLWRKGGRAFPNKPDE). The span at 59 to 70 (STKKPWRQKGTG) shows a compositional bias: basic residues.

Belongs to the universal ribosomal protein uL4 family. Part of the 50S ribosomal subunit.

Its function is as follows. One of the primary rRNA binding proteins, this protein initially binds near the 5'-end of the 23S rRNA. It is important during the early stages of 50S assembly. It makes multiple contacts with different domains of the 23S rRNA in the assembled 50S subunit and ribosome. Functionally, forms part of the polypeptide exit tunnel. This chain is Large ribosomal subunit protein uL4, found in Neisseria meningitidis serogroup C (strain 053442).